A 465-amino-acid polypeptide reads, in one-letter code: uncharacterized protein (465 aa).

11 helical membrane-spanning segments follow: residues 19–39 (VLGPAHVWALGVGIVLVGEYM), 50–70 (MIAGLMACWVAGLLYTCVAMI), 91–111 (IVGPLMAFNVGLFLVMAYTML), 140–160 (FIVLAIMFLAWLNYRGVLATL), 164–184 (LVITAIAFLAIVALFVSVQFG), 201–221 (PYGWVGIVASLHFGLWYYLGI), 244–264 (AGIMTLLIAATMTWYICSGLM), 288–308 (LMVLLFVGTAFATLASANGCI), 342–362 (IVFLVPIALIFALGAPLDQVV), 363–383 (TFSILSGLLGYTFMTFNMVMF), and 403–423 (LPTVVLLILCSTAYFAVFLGY).

This sequence belongs to the amino acid-polyamine-organocation (APC) superfamily.

It is found in the cell membrane. In terms of biological role, probable amino-acid or metabolite transport protein. This is an uncharacterized protein from Rhizobium meliloti (strain 1021) (Ensifer meliloti).